Reading from the N-terminus, the 173-residue chain is NADH-quinone oxidoreductase subunit B 1 (173 aa).

[4Fe-4S] cluster contacts are provided by C42, C43, C107, and C137.

It belongs to the complex I 20 kDa subunit family. NDH-1 is composed of 14 different subunits. Subunits NuoB, C, D, E, F, and G constitute the peripheral sector of the complex. [4Fe-4S] cluster serves as cofactor.

The protein resides in the cell inner membrane. It catalyses the reaction a quinone + NADH + 5 H(+)(in) = a quinol + NAD(+) + 4 H(+)(out). Functionally, NDH-1 shuttles electrons from NADH, via FMN and iron-sulfur (Fe-S) centers, to quinones in the respiratory chain. The immediate electron acceptor for the enzyme in this species is believed to be ubiquinone. Couples the redox reaction to proton translocation (for every two electrons transferred, four hydrogen ions are translocated across the cytoplasmic membrane), and thus conserves the redox energy in a proton gradient. In Anaeromyxobacter sp. (strain K), this protein is NADH-quinone oxidoreductase subunit B 1.